A 596-amino-acid polypeptide reads, in one-letter code: Nuclear receptor subfamily 2 group C member 2 (596 aa).

Phosphoserine; by MAPK is present on Ser-19. Ser-46 is subject to Phosphoserine. Ser-55 and Ser-68 each carry phosphoserine; by MAPK. Residue Ser-98 is modified to Phosphoserine. The segment at residues 114–189 (VEYCVVCGDK…MGMKMESVQS (76 aa)) is a DNA-binding region (nuclear receptor). 2 NR C4-type zinc fingers span residues 117 to 137 (CVVCGDKASGRHYGAVSCEGC) and 153 to 177 (CRSSQDCIINKHHRNRCQFCRLKKC). Lys-192 participates in a covalent cross-link: Glycyl lysine isopeptide (Lys-Gly) (interchain with G-Cter in SUMO2). Position 219 is a phosphoserine (Ser-219). An N6-acetyllysine modification is found at Lys-231. Residues 341-583 (GSIHVISRDQ…SIIPYILKME (243 aa)) enclose the NR LBD domain.

It belongs to the nuclear hormone receptor family. NR2 subfamily. Homodimer; can bind DNA as homodimer. Heterodimer; binds DNA as a heterodimer with NR2C1 required for chromatin remodeling and for binding to promoter regions such as globin DR1 repeats. Interacts with NR2C2AP; the interaction represses selective NR2C2-mediated transcriptional activity. Interacts with PCAF; the interaction preferentially occurs on the non-phosphorylated form and induces NR2C2-mediated transactivation activity and does not require the ligand-binding domain. Interacts (MAPK-mediated phosphorylated form) with NRIP1; the interaction promotes repression of NR2C2-mediated activity. Interacts with NLRP10. Interacts (via ligand-binding region) with transcriptional corepressor JAZF1; the interaction promotes NR2C2-mediated transcriptional repression. Post-translationally, phosphorylation on Ser-19 and Ser-68 is an important regulator of NR2C2-mediated transcriptional activity. Phosphorylation on these residues recruits the corepressor, NRIP1, leading to transcripional repression, whereas the non-phosphorylated form preferentially recruits the coactivator, PCAF. Expressed, during embryogenesis, in perichondrium, developing glomeruli structures and tubules of kidney, as well as in intestiinal villi. Also expressed in lung and hair follicles.

The protein localises to the nucleus. In terms of biological role, orphan nuclear receptor that can act as a repressor or activator of transcription. An important repressor of nuclear receptor signaling pathways such as retinoic acid receptor, retinoid X, vitamin D3 receptor, thyroid hormone receptor and estrogen receptor pathways. May regulate gene expression during the late phase of spermatogenesis. Activates transcriptional activity of LHCG and is antagonist of PPARA-mediated transactivation. Together with NR2C1, forms the core of the DRED (direct repeat erythroid-definitive) complex that represses embryonic and fetal globin transcription including that of GATA1. Binds to hormone response elements (HREs) consisting of two 5'-AGGTCA-3' half site direct repeat consensus sequences. Plays a fundamental role in early embryonic development and embryonic stem cells. Required for normal spermatogenesis and cerebellum development. Appears to be important for neurodevelopmentally regulated behavior. This Mus musculus (Mouse) protein is Nuclear receptor subfamily 2 group C member 2 (Nr2c2).